The primary structure comprises 191 residues: Photosystem I assembly protein Ycf4 (191 aa).

Helical transmembrane passes span 33-53 and 74-94; these read LLAVIVTIGGLGFTLTCLSSY and LVMGLYGIAGLLLASYLWAMI.

The protein belongs to the Ycf4 family.

It is found in the cellular thylakoid membrane. In terms of biological role, seems to be required for the assembly of the photosystem I complex. In Prochlorococcus marinus (strain MIT 9303), this protein is Photosystem I assembly protein Ycf4.